Here is a 242-residue protein sequence, read N- to C-terminus: Small ribosomal subunit protein uS2 (242 aa).

This sequence belongs to the universal ribosomal protein uS2 family.

The polypeptide is Small ribosomal subunit protein uS2 (Shewanella halifaxensis (strain HAW-EB4)).